The chain runs to 156 residues: Ribosomal RNA large subunit methyltransferase H (156 aa).

Residues leucine 73, glycine 104, and 123–128 (LSPLTM) each bind S-adenosyl-L-methionine.

It belongs to the RNA methyltransferase RlmH family. As to quaternary structure, homodimer.

It localises to the cytoplasm. The catalysed reaction is pseudouridine(1915) in 23S rRNA + S-adenosyl-L-methionine = N(3)-methylpseudouridine(1915) in 23S rRNA + S-adenosyl-L-homocysteine + H(+). Specifically methylates the pseudouridine at position 1915 (m3Psi1915) in 23S rRNA. The polypeptide is Ribosomal RNA large subunit methyltransferase H (Proteus mirabilis (strain HI4320)).